The primary structure comprises 261 residues: MILDEIIKKTKEDLKKRKADYPQEWLGRSLAYNPYVPRDVLGALRASKSEPIKIIAEIKKASPSKGMIREDFEPIKIAQEYEQYANAFSILTEPHWFKGNIEYITQVRRYASRPILRKDFIVDKYQILEALVYGADFILLIAKALTQGELKELLEYAHHLGLEVLVETHDASDVKKAVFAGANIIGINHRNLDDFTMDMGLCEKLVPLLPNGKIIVAESGLYEYEQLRELSKIGVDAFLIGEHFMRQDDIKSAVKKIKEGE.

It belongs to the TrpC family.

It carries out the reaction 1-(2-carboxyphenylamino)-1-deoxy-D-ribulose 5-phosphate + H(+) = (1S,2R)-1-C-(indol-3-yl)glycerol 3-phosphate + CO2 + H2O. It participates in amino-acid biosynthesis; L-tryptophan biosynthesis; L-tryptophan from chorismate: step 4/5. This Campylobacter concisus (strain 13826) protein is Indole-3-glycerol phosphate synthase.